The primary structure comprises 255 residues: UDP-2,3-diacylglucosamine hydrolase (255 aa).

5 residues coordinate Mn(2+): D8, H10, D41, N79, and H114. Position 79–80 (79–80 (NR)) interacts with substrate. Positions 122, 160, 164, 167, and 195 each coordinate substrate. H195 and H197 together coordinate Mn(2+).

It belongs to the LpxH family. It depends on Mn(2+) as a cofactor.

It localises to the cell inner membrane. The enzyme catalyses UDP-2-N,3-O-bis[(3R)-3-hydroxytetradecanoyl]-alpha-D-glucosamine + H2O = 2-N,3-O-bis[(3R)-3-hydroxytetradecanoyl]-alpha-D-glucosaminyl 1-phosphate + UMP + 2 H(+). It functions in the pathway glycolipid biosynthesis; lipid IV(A) biosynthesis; lipid IV(A) from (3R)-3-hydroxytetradecanoyl-[acyl-carrier-protein] and UDP-N-acetyl-alpha-D-glucosamine: step 4/6. In terms of biological role, hydrolyzes the pyrophosphate bond of UDP-2,3-diacylglucosamine to yield 2,3-diacylglucosamine 1-phosphate (lipid X) and UMP by catalyzing the attack of water at the alpha-P atom. Involved in the biosynthesis of lipid A, a phosphorylated glycolipid that anchors the lipopolysaccharide to the outer membrane of the cell. In Hamiltonella defensa subsp. Acyrthosiphon pisum (strain 5AT), this protein is UDP-2,3-diacylglucosamine hydrolase.